Here is an 82-residue protein sequence, read N- to C-terminus: Sec-independent protein translocase protein TatA (82 aa).

A helical membrane pass occupies residues 1 to 21; that stretch reads MGGISIWQLLIIAVIIVLLFG. The interval 48 to 82 is disordered; the sequence is PAKEAKKDADFVPQNLEKKEAETVEKQKQNDKEQA.

Belongs to the TatA/E family. In terms of assembly, the Tat system comprises two distinct complexes: a TatABC complex, containing multiple copies of TatA, TatB and TatC subunits, and a separate TatA complex, containing only TatA subunits. Substrates initially bind to the TatABC complex, which probably triggers association of the separate TatA complex to form the active translocon.

The protein resides in the cell inner membrane. Functionally, part of the twin-arginine translocation (Tat) system that transports large folded proteins containing a characteristic twin-arginine motif in their signal peptide across membranes. TatA could form the protein-conducting channel of the Tat system. The sequence is that of Sec-independent protein translocase protein TatA from Aliivibrio fischeri (strain ATCC 700601 / ES114) (Vibrio fischeri).